The chain runs to 180 residues: Bifunctional protein PyrR (180 aa).

A PRPP-binding motif is present at residues Val-101–Thr-113.

It belongs to the purine/pyrimidine phosphoribosyltransferase family. PyrR subfamily. In terms of assembly, homodimer and homohexamer; in equilibrium.

The enzyme catalyses UMP + diphosphate = 5-phospho-alpha-D-ribose 1-diphosphate + uracil. Its function is as follows. Regulates transcriptional attenuation of the pyrimidine nucleotide (pyr) operon by binding in a uridine-dependent manner to specific sites on pyr mRNA. This disrupts an antiterminator hairpin in the RNA and favors formation of a downstream transcription terminator, leading to a reduced expression of downstream genes. Also displays a weak uracil phosphoribosyltransferase activity which is not physiologically significant. This Oceanobacillus iheyensis (strain DSM 14371 / CIP 107618 / JCM 11309 / KCTC 3954 / HTE831) protein is Bifunctional protein PyrR.